Consider the following 969-residue polypeptide: MIKTLLRRMSSNTTIPTPNGSNHWTASKVRSTFLDYFKKQQHTYVPSSSVVPHNDPTLLFANAGMNQYKPIFLGTVDPASDFASLKRAANSQKCIRAGGKHNDLEDVGRDSYHHTFFEMLGNWSFGDYFKKEAIDYSWELLTKVYGLQEDRLYVTYFGGDEKQGLEPDLEAKNFWLKVGVPEDHILPGSVEDNFWEMGDQGPCGPCSEIHYDRIGGRNASALVNMDDPNVLEVWNVVFIQYNREADGNLRTLPNKHIDTGMGFERLVSILQNKYSNYDTDVFLPIFDKIREITGVRPYTGKFGNEDKDGIDTAYRVIADHVRTLTFAICDGGVPNNEGRGYVLRRILRRGSRYVRKYMNYPIGGFFQQLVDVVIEQNKEIFPEISSGAQDLKEILNEEELSFAKTLDRGEKLFEQYAIIASKTPEQTLSGKDVWRLYDTYGFPVDLTRLMAEEAGLKIDEEGFERAKEESREASKGSGTKDGKTLVKLDVHALSELDQNDAIPKTNDEFKYGLENVKAKVVGIYDGSKFVDSIEDPSIQYGILLDKTPFYAEQGGQEYDTGKLVIDGKSEFNVANVQVYAGYVLHTGNIVDGKLNVGDEIIATYDELRRWPIRNNHTGTHILNFALREVLGDGVDQKGSLVAPEKLRFDFSHKQAVTAKELEKIEAISNKYIKNNDKVYYKDVSLTKAKEINGLRAVFGETYPDPVRVVSIGVSVDDLLADPTNTKWHEISIEFCGGTHVAKTGDIKDLVIIEESGIAKGIRRIVAVTGHDAHHVQKVANEFEQEIDNASSLPFGVAKESKSKELGVALKKLSISVLDKQRLTEKFNKLDKSIKDNLKAKQKEETKKTLDVVNNWLNDKENASSFLVAHVPITANAKAITEAINLIKKQDKTKSIYLLTGETDKVAHGCYVSDEAIAKGINANELAKAVSENIGGKAGGKGNIVQGMGDKPQGINTAIEEVTKLFKEKL.

A mitochondrion-targeting transit peptide spans 1-8 (MIKTLLRR). The Zn(2+) site is built by histidine 616, histidine 620, cysteine 735, and histidine 739.

Belongs to the class-II aminoacyl-tRNA synthetase family. Monomer. Zn(2+) is required as a cofactor.

It localises to the mitochondrion. The protein localises to the cytoplasm. It catalyses the reaction tRNA(Ala) + L-alanine + ATP = L-alanyl-tRNA(Ala) + AMP + diphosphate. Its function is as follows. Catalyzes the attachment of alanine to tRNA(Ala) in a two-step reaction: alanine is first activated by ATP to form Ala-AMP and then transferred to the acceptor end of tRNA(Ala). Also edits incorrectly charged tRNA(Ala) via its editing domain. The protein is Alanine--tRNA ligase of Candida albicans (strain SC5314 / ATCC MYA-2876) (Yeast).